Here is a 1902-residue protein sequence, read N- to C-terminus: Rho GTPase-activating protein 21-B (1902 aa).

Disordered stretches follow at residues 1 to 44, 78 to 97, 284 to 317, 348 to 369, 409 to 450, 581 to 603, 613 to 632, and 879 to 902; these read MATR…EGFC, TSVK…RPRN, RTNR…NVPM, PAAH…GSHQ, NTTD…SQER, TRNF…RSGF, IPTP…DDGI, and KARE…DVFS. The span at 10–22 shows a compositional bias: polar residues; sequence EQQQEPSSPASEI. A PDZ domain is found at 77 to 162; it reads HTSVKDEENG…TLELSVMPKD (86 aa). The span at 305 to 317 shows a compositional bias: low complexity; it reads TTSPSSSTPNVPM. The span at 409 to 424 shows a compositional bias: polar residues; it reads NTTDYNQMLPNRSSGQ. Positions 903 to 1016 constitute a PH domain; it reads DSNKEGFLYF…WIKAIQENGN (114 aa). The span at 1039–1063 shows a compositional bias: polar residues; it reads TMMSSSSNKTEPSPKAQRQTLSIRQ. Positions 1039–1095 are disordered; the sequence is TMMSSSSNKTEPSPKAQRQTLSIRQQFRAGKPDDDISPPKDKGSWRRIMKKPFEKKP. The span at 1068–1082 shows a compositional bias: basic and acidic residues; the sequence is GKPDDDISPPKDKGS. Residues 1103–1295 form the Rho-GAP domain; the sequence is VRLDDCPPAH…TLIQKHDWFF (193 aa). Disordered stretches follow at residues 1306 to 1357, 1375 to 1394, 1494 to 1520, 1559 to 1704, 1729 to 1748, and 1803 to 1890; these read TVHE…GSGK, RKRK…DELD, MSDS…VSPE, VQSV…EPAW, QKAN…RHTL, and TSTS…KLSG. The span at 1339–1357 shows a compositional bias: low complexity; it reads SDSATSDSAKSKGSWGSGK. Over residues 1494 to 1511 the composition is skewed to polar residues; that stretch reads MSDSGTMLSTSSQASVQG. Basic and acidic residues-rich tracts occupy residues 1575-1585 and 1601-1613; these read SELVSEGRPME and FDRR…EEPS. Residues 1614–1630 show a composition bias toward polar residues; that stretch reads RNVQVNSEGSPSCTEGS. 2 stretches are compositionally biased toward basic and acidic residues: residues 1634–1652 and 1661–1673; these read KMDR…DTLS and TDSD…KTEE. Residues 1737–1748 show a composition bias toward basic residues; sequence RKKKNIRRRHTL. Residues 1865–1878 show a composition bias toward polar residues; sequence NGDSFQSKNKNNFS.

The protein resides in the golgi apparatus membrane. The protein localises to the cell junction. It localises to the cytoplasmic vesicle membrane. Its subcellular location is the cytoplasm. It is found in the cytoskeleton. Its function is as follows. GTPase-activating protein (GAP) for rhoa and cdc42. In Xenopus laevis (African clawed frog), this protein is Rho GTPase-activating protein 21-B (arhgap21-b).